Consider the following 37-residue polypeptide: Cytochrome b6-f complex subunit 5 (37 aa).

The helical transmembrane segment at 5–25 threads the bilayer; sequence LLSGIVLGLIPVTLAGLFVTA.

The protein belongs to the PetG family. As to quaternary structure, the 4 large subunits of the cytochrome b6-f complex are cytochrome b6, subunit IV (17 kDa polypeptide, PetD), cytochrome f and the Rieske protein, while the 4 small subunits are PetG, PetL, PetM and PetN. The complex functions as a dimer.

It is found in the plastid. The protein localises to the chloroplast thylakoid membrane. Functionally, component of the cytochrome b6-f complex, which mediates electron transfer between photosystem II (PSII) and photosystem I (PSI), cyclic electron flow around PSI, and state transitions. PetG is required for either the stability or assembly of the cytochrome b6-f complex. The sequence is that of Cytochrome b6-f complex subunit 5 from Chlorokybus atmophyticus (Soil alga).